Here is a 70-residue protein sequence, read N- to C-terminus: MRGGGKKNGSNVEPLRATRPCAECGRPSVREHYPFCSERCRNVDLNRWLSGSYAIPVADDESKADDGDER.

Residues cysteine 21, cysteine 24, cysteine 36, and cysteine 40 each contribute to the Zn(2+) site.

Belongs to the DNA gyrase inhibitor YacG family. As to quaternary structure, interacts with GyrB. It depends on Zn(2+) as a cofactor.

In terms of biological role, inhibits all the catalytic activities of DNA gyrase by preventing its interaction with DNA. Acts by binding directly to the C-terminal domain of GyrB, which probably disrupts DNA binding by the gyrase. In Rhizobium meliloti (strain 1021) (Ensifer meliloti), this protein is DNA gyrase inhibitor YacG.